The sequence spans 466 residues: Light-independent protochlorophyllide reductase subunit N (466 aa).

Cysteine 23, cysteine 48, and cysteine 108 together coordinate [4Fe-4S] cluster.

The protein belongs to the BchN/ChlN family. Protochlorophyllide reductase is composed of three subunits; ChlL, ChlN and ChlB. Forms a heterotetramer of two ChlB and two ChlN subunits. [4Fe-4S] cluster is required as a cofactor.

It catalyses the reaction chlorophyllide a + oxidized 2[4Fe-4S]-[ferredoxin] + 2 ADP + 2 phosphate = protochlorophyllide a + reduced 2[4Fe-4S]-[ferredoxin] + 2 ATP + 2 H2O. It participates in porphyrin-containing compound metabolism; chlorophyll biosynthesis (light-independent). In terms of biological role, component of the dark-operative protochlorophyllide reductase (DPOR) that uses Mg-ATP and reduced ferredoxin to reduce ring D of protochlorophyllide (Pchlide) to form chlorophyllide a (Chlide). This reaction is light-independent. The NB-protein (ChlN-ChlB) is the catalytic component of the complex. This chain is Light-independent protochlorophyllide reductase subunit N, found in Synechococcus elongatus (strain ATCC 33912 / PCC 7942 / FACHB-805) (Anacystis nidulans R2).